A 93-amino-acid chain; its full sequence is UPF0147 protein PF0239 (93 aa).

This sequence belongs to the UPF0147 family.

This chain is UPF0147 protein PF0239, found in Pyrococcus furiosus (strain ATCC 43587 / DSM 3638 / JCM 8422 / Vc1).